The following is a 240-amino-acid chain: Methylthioribulose-1-phosphate dehydratase (240 aa).

A substrate-binding site is contributed by Cys-100. Residues His-117 and His-119 each coordinate Zn(2+). The Proton donor/acceptor role is filled by Glu-146. Residue His-202 coordinates Zn(2+).

Belongs to the aldolase class II family. MtnB subfamily. Zn(2+) serves as cofactor.

The protein resides in the cytoplasm. The catalysed reaction is 5-(methylsulfanyl)-D-ribulose 1-phosphate = 5-methylsulfanyl-2,3-dioxopentyl phosphate + H2O. It functions in the pathway amino-acid biosynthesis; L-methionine biosynthesis via salvage pathway; L-methionine from S-methyl-5-thio-alpha-D-ribose 1-phosphate: step 2/6. In terms of biological role, catalyzes the dehydration of methylthioribulose-1-phosphate (MTRu-1-P) into 2,3-diketo-5-methylthiopentyl-1-phosphate (DK-MTP-1-P). This chain is Methylthioribulose-1-phosphate dehydratase, found in Emericella nidulans (strain FGSC A4 / ATCC 38163 / CBS 112.46 / NRRL 194 / M139) (Aspergillus nidulans).